A 64-amino-acid polypeptide reads, in one-letter code: uncharacterized protein (64 aa).

The segment at 35-64 (TIRKPPIEHAAGPLGSTSRAGHRSYGGVAS) is disordered.

This is an uncharacterized protein from Mycobacterium tuberculosis (strain ATCC 25618 / H37Rv).